Here is a 1040-residue protein sequence, read N- to C-terminus: Isoleucine--tRNA ligase (1040 aa).

The 'HIGH' region motif lies at 47-57 (PYCSGSIHLGT). The 'KMSKS' region signature appears at 605–609 (KMSKS). Lys608 contributes to the ATP binding site.

This sequence belongs to the class-I aminoacyl-tRNA synthetase family. IleS type 2 subfamily. As to quaternary structure, monomer. Zn(2+) serves as cofactor.

It localises to the cytoplasm. It catalyses the reaction tRNA(Ile) + L-isoleucine + ATP = L-isoleucyl-tRNA(Ile) + AMP + diphosphate. Functionally, catalyzes the attachment of isoleucine to tRNA(Ile). As IleRS can inadvertently accommodate and process structurally similar amino acids such as valine, to avoid such errors it has two additional distinct tRNA(Ile)-dependent editing activities. One activity is designated as 'pretransfer' editing and involves the hydrolysis of activated Val-AMP. The other activity is designated 'posttransfer' editing and involves deacylation of mischarged Val-tRNA(Ile). The sequence is that of Isoleucine--tRNA ligase from Methanococcus aeolicus (strain ATCC BAA-1280 / DSM 17508 / OCM 812 / Nankai-3).